Consider the following 301-residue polypeptide: Ubiquitin thioesterase OTU1 (301 aa).

A UBX-like region spans residues 4-80; the sequence is KVTGAGINQV…TIESSDSNES (77 aa). One can recognise an OTU domain in the interval 109–229; it reads LSVHPVLDDN…GIHYDSLTMN (121 aa). The cys-loop stretch occupies residues 114–120; that stretch reads VLDDNSC. Asp-117 is a catalytic residue. Residue Cys-120 is the Nucleophile of the active site. Lys-160 participates in a covalent cross-link: Glycyl lysine isopeptide (Lys-Gly) (interchain with G-Cter in ubiquitin). Residues 169 to 179 form a variable-loop region; it reads ILKMESWGGAI. Residues 218 to 222 form a his-loop region; the sequence is FNGIH. Ile-221 is a binding site for substrate. The active site involves His-222. Residues 243-248 form an S2 site region; sequence DDVLTA. A C2H2-type zinc finger spans residues 270–294; that stretch reads IKCNTCQMTFVGEREVARHAESTGH. The active site involves His-294.

In terms of assembly, forms a complex composed of CDC48, NPL4, UFD1, DOA1, SHP1 and deubiquitinase OTU1; within the complex interacts with CDC48 and DOA1/UFD3.

The protein resides in the cytoplasm. It is found in the nucleus. The catalysed reaction is Thiol-dependent hydrolysis of ester, thioester, amide, peptide and isopeptide bonds formed by the C-terminal Gly of ubiquitin (a 76-residue protein attached to proteins as an intracellular targeting signal).. Its function is as follows. Hydrolase that can remove conjugated ubiquitin from proteins and may therefore play an important regulatory role at the level of protein turnover by preventing degradation. Participates in the regulation of the ubiquitin conjugation pathway involving CDC48 by hindering multiubiquitination of substrates at the CDC48 chaperone. May be indirectly involved in PIS1 gene expression. In Saccharomyces cerevisiae (strain ATCC 204508 / S288c) (Baker's yeast), this protein is Ubiquitin thioesterase OTU1 (OTU1).